The chain runs to 240 residues: tRNA (guanine-N(1)-)-methyltransferase (240 aa).

Residues Gly110 and 130–135 each bind S-adenosyl-L-methionine; that span reads VGDYVL.

This sequence belongs to the RNA methyltransferase TrmD family. As to quaternary structure, homodimer.

Its subcellular location is the cytoplasm. It catalyses the reaction guanosine(37) in tRNA + S-adenosyl-L-methionine = N(1)-methylguanosine(37) in tRNA + S-adenosyl-L-homocysteine + H(+). In terms of biological role, specifically methylates guanosine-37 in various tRNAs. The chain is tRNA (guanine-N(1)-)-methyltransferase from Borrelia recurrentis (strain A1).